The sequence spans 664 residues: MPFRIEAPYQPTGDQPQAIEKLVAGLRAGYRHQTLLGATGTGKTFVMAHIFAQIQRPTLVLAHNKTLVSQLWAEFREFLPDAAVEMFISYYDEYTPEAYVPSKDLYIEKEASINEEIDRLRHAATQALLTRRDVLIVASVSAIFGLGSPHDYGQEKIHLRTGEVRNRDKLLRQLIDLQFERNDVDFQRGTFRVRGDTLDIIPANAETAIRVEFWGDEIERIVELDPLTGEVLLKHTAVEIYPAKHFVTTKEKLQLAIVSIQAELNERLQELEAAGKLLEAQRLKQRTLYDLEMLSEVGYCSGIENYSRHLDGRAPGQTPWTLLDYFPDDFLMFIDESHITIPQLRGMYNGDRQRKQTLVDYGFRLPSALDNRPLKFEEFEQHVYQVIYVSATPGPYEREKSEQIVEQIIRPTGLLDPEIEVRPTRGQIDDLLGEIRRRVERKQRVLVTTLTKRMAEDLADYLKEMGVRTMYLHADIDTIERVEILRDLRLGVYDVVVGINLLREGLDLPEVSLVAILDADKEGYLRSETSLIQIIGRAARHIEGKVIMYADTITRSMEVAIRETQRRREIQMAHNVRHGITPQGIAKGVRDLTDRIRKVAEERGEYVTTPETAVPVDLPRDEVLKLIKDLEKQMKQAAKALAFEKAAALRDQIVELRQALALSE.

A Helicase ATP-binding domain is found at Ala24 to Asn182. Gly37–Thr44 lines the ATP pocket. Residues Tyr90–Ile113 carry the Beta-hairpin motif. A Helicase C-terminal domain is found at Gln427–Thr593. The UVR domain maps to Leu624–Ala659.

Belongs to the UvrB family. In terms of assembly, forms a heterotetramer with UvrA during the search for lesions. Interacts with UvrC in an incision complex.

The protein localises to the cytoplasm. Functionally, the UvrABC repair system catalyzes the recognition and processing of DNA lesions. A damage recognition complex composed of 2 UvrA and 2 UvrB subunits scans DNA for abnormalities. Upon binding of the UvrA(2)B(2) complex to a putative damaged site, the DNA wraps around one UvrB monomer. DNA wrap is dependent on ATP binding by UvrB and probably causes local melting of the DNA helix, facilitating insertion of UvrB beta-hairpin between the DNA strands. Then UvrB probes one DNA strand for the presence of a lesion. If a lesion is found the UvrA subunits dissociate and the UvrB-DNA preincision complex is formed. This complex is subsequently bound by UvrC and the second UvrB is released. If no lesion is found, the DNA wraps around the other UvrB subunit that will check the other stand for damage. The sequence is that of UvrABC system protein B from Chloroflexus aggregans (strain MD-66 / DSM 9485).